A 232-amino-acid polypeptide reads, in one-letter code: MVQTKRQKAIDLAVVPGKAYGIDEAIKILKTATKAKFIESVDVAIRLGVDVKKSDQQVRGSTLLPAGTGRAVRVAVFVPSGAKAEDALAAGADAVGMDDLAEKMQAGDLNYDVVIATPDAMRVVGKLGTLLGPRGLMPNPKVGTVSQNPGEAVKNAKSGQVRYRADKAGIIHCVIGKVNFDDEALKLNLQALLVDLIKIKPTASKGAYLQKVSLSSTMGPGVMIDQSTLSLK.

Belongs to the universal ribosomal protein uL1 family. As to quaternary structure, part of the 50S ribosomal subunit.

Binds directly to 23S rRNA. The L1 stalk is quite mobile in the ribosome, and is involved in E site tRNA release. In terms of biological role, protein L1 is also a translational repressor protein, it controls the translation of the L11 operon by binding to its mRNA. The chain is Large ribosomal subunit protein uL1 from Xylella fastidiosa (strain 9a5c).